The primary structure comprises 491 residues: Ketol-acid reductoisomerase (NADP(+)) (491 aa).

Positions 15 to 208 constitute a KARI N-terminal Rossmann domain; it reads AQLGKCRFMG…GGHRAGVLES (194 aa). NADP(+) contacts are provided by residues 45-48, Arg-68, Arg-76, Ser-78, and 108-110; these read CGAQ and DKQ. His-132 is a catalytic residue. Gly-158 serves as a coordination point for NADP(+). 2 KARI C-terminal knotted domains span residues 209-344 and 345-484; these read SFVA…TAPQ and YEGK…MTDM. Residues Asp-217, Glu-221, Glu-389, and Glu-393 each coordinate Mg(2+). Ser-414 contributes to the substrate binding site.

It belongs to the ketol-acid reductoisomerase family. Requires Mg(2+) as cofactor.

It carries out the reaction (2R)-2,3-dihydroxy-3-methylbutanoate + NADP(+) = (2S)-2-acetolactate + NADPH + H(+). The catalysed reaction is (2R,3R)-2,3-dihydroxy-3-methylpentanoate + NADP(+) = (S)-2-ethyl-2-hydroxy-3-oxobutanoate + NADPH + H(+). Its pathway is amino-acid biosynthesis; L-isoleucine biosynthesis; L-isoleucine from 2-oxobutanoate: step 2/4. It functions in the pathway amino-acid biosynthesis; L-valine biosynthesis; L-valine from pyruvate: step 2/4. Functionally, involved in the biosynthesis of branched-chain amino acids (BCAA). Catalyzes an alkyl-migration followed by a ketol-acid reduction of (S)-2-acetolactate (S2AL) to yield (R)-2,3-dihydroxy-isovalerate. In the isomerase reaction, S2AL is rearranged via a Mg-dependent methyl migration to produce 3-hydroxy-3-methyl-2-ketobutyrate (HMKB). In the reductase reaction, this 2-ketoacid undergoes a metal-dependent reduction by NADPH to yield (R)-2,3-dihydroxy-isovalerate. The polypeptide is Ketol-acid reductoisomerase (NADP(+)) (Escherichia coli (strain 55989 / EAEC)).